The primary structure comprises 323 residues: Tyrosine recombinase XerD (323 aa).

In terms of domain architecture, Core-binding (CB) spans 21 to 106 (AEDDQAIQRF…TLRGFYALCL (86 aa)). Positions 127 to 317 (SLPKALTESQ…ARQHLQTLHA (191 aa)) constitute a Tyr recombinase domain. Residues R167, K191, H269, R272, and H295 contribute to the active site. The active-site O-(3'-phospho-DNA)-tyrosine intermediate is Y304.

It belongs to the 'phage' integrase family. XerD subfamily. As to quaternary structure, forms a cyclic heterotetrameric complex composed of two molecules of XerC and two molecules of XerD.

The protein localises to the cytoplasm. In terms of biological role, site-specific tyrosine recombinase, which acts by catalyzing the cutting and rejoining of the recombining DNA molecules. The XerC-XerD complex is essential to convert dimers of the bacterial chromosome into monomers to permit their segregation at cell division. It also contributes to the segregational stability of plasmids. The polypeptide is Tyrosine recombinase XerD (Xanthomonas campestris pv. campestris (strain ATCC 33913 / DSM 3586 / NCPPB 528 / LMG 568 / P 25)).